The chain runs to 296 residues: Transcription repressor OFP3 (296 aa).

2 disordered regions span residues 27–115 (MSRS…SANA) and 131–196 (PSDQ…AHSS). A compositionally biased stretch (polar residues) spans 60–69 (LSSTAHHPQA). Basic residues predominate over residues 78–88 (SFKRKIKRKTV). Low complexity predominate over residues 92-115 (SSRLKLSTSSSLNHRSKSSSSANA). A compositionally biased stretch (basic and acidic residues) spans 136–159 (FVHDPEPHSSIDIKDELSVRKLDD). The OVATE domain maps to 228-287 (IVLSSVDPEKDFRESMVEMIMENKMREQKDLEDLLACYLSLNSSEYHDVIIKAFENTWLH).

In terms of assembly, interacts with BLH1, BLH3, KNAT5 and KNAT7.

It is found in the nucleus. Functionally, transcriptional repressor that may regulate multiple aspects of plant growth and development through the regulation of BEL1-LIKE (BLH) and KNOX TALE (KNAT) homeodomain transcription factors. The chain is Transcription repressor OFP3 (OFP3) from Arabidopsis thaliana (Mouse-ear cress).